The following is a 141-amino-acid chain: Putative pre-16S rRNA nuclease (141 aa).

The protein belongs to the YqgF nuclease family.

The protein localises to the cytoplasm. Functionally, could be a nuclease involved in processing of the 5'-end of pre-16S rRNA. This chain is Putative pre-16S rRNA nuclease, found in Dictyoglomus turgidum (strain DSM 6724 / Z-1310).